A 364-amino-acid chain; its full sequence is Uroporphyrinogen decarboxylase (364 aa).

Substrate contacts are provided by residues 28–32 (RQAGR), Asp78, Tyr160, Thr215, and His333.

It belongs to the uroporphyrinogen decarboxylase family. As to quaternary structure, homodimer.

The protein localises to the cytoplasm. It carries out the reaction uroporphyrinogen III + 4 H(+) = coproporphyrinogen III + 4 CO2. Its pathway is porphyrin-containing compound metabolism; protoporphyrin-IX biosynthesis; coproporphyrinogen-III from 5-aminolevulinate: step 4/4. Catalyzes the decarboxylation of four acetate groups of uroporphyrinogen-III to yield coproporphyrinogen-III. The polypeptide is Uroporphyrinogen decarboxylase (Burkholderia pseudomallei (strain 668)).